The chain runs to 59 residues: MSRRRGVMSNQFKEELAKELGFYDVVQKEGWGGIRAKDAGNMVKRAIEIAEQQLMKRNQ.

The protein belongs to the alpha/beta-type SASP family.

Functionally, may play some important role in either sporulation or the dormant spore. The polypeptide is Protein SspF (sspF) (Bacillus cereus (strain ATCC 14579 / DSM 31 / CCUG 7414 / JCM 2152 / NBRC 15305 / NCIMB 9373 / NCTC 2599 / NRRL B-3711)).